A 240-amino-acid chain; its full sequence is NAD(P)H-hydrate epimerase (240 aa).

In terms of domain architecture, YjeF N-terminal spans 15–224 (AQEIDAELMG…SYNLKLPCYP (210 aa)). 66-70 (NQGGD) lines the (6S)-NADPHX pocket. Residues Gln67 and Asp129 each coordinate K(+). Residues 133–139 (GFSFHSE) and Asp162 each bind (6S)-NADPHX. Residue Ser165 participates in K(+) binding.

The protein belongs to the NnrE/AIBP family. K(+) is required as a cofactor.

It is found in the cytoplasm. The protein localises to the mitochondrion. It catalyses the reaction (6R)-NADHX = (6S)-NADHX. The catalysed reaction is (6R)-NADPHX = (6S)-NADPHX. Catalyzes the epimerization of the S- and R-forms of NAD(P)HX, a damaged form of NAD(P)H that is a result of enzymatic or heat-dependent hydration. This is a prerequisite for the S-specific NAD(P)H-hydrate dehydratase to allow the repair of both epimers of NAD(P)HX. The chain is NAD(P)H-hydrate epimerase from Puccinia graminis f. sp. tritici (strain CRL 75-36-700-3 / race SCCL) (Black stem rust fungus).